Reading from the N-terminus, the 493-residue chain is Exosome complex component Rrp41 (493 aa).

2 disordered regions span residues 244–264 and 291–493; these read VSEE…PSPV and LASE…EKDE. A compositionally biased stretch (basic and acidic residues) spans 249-259; sequence APEKGAEKEVL. Residues 297–377 show a composition bias toward acidic residues; sequence PDFEDELEEE…ALEEETELEA (81 aa). Positions 383 to 400 are enriched in basic and acidic residues; it reads PELKEFDEIEARLEKEDA. The segment covering 401–471 has biased composition (acidic residues); sequence SIEAEEEIEP…EAEEEPEEEK (71 aa). Residues 472–493 show a composition bias toward basic and acidic residues; the sequence is SEGPWKVVKDPSEAGTRGEKDE.

The protein belongs to the RNase PH family. Rrp41 subfamily. As to quaternary structure, component of the archaeal exosome complex. Forms a hexameric ring-like arrangement composed of 3 Rrp41-Rrp42 heterodimers. The hexameric ring associates with a trimer of Rrp4 and/or Csl4 subunits.

It localises to the cytoplasm. Its function is as follows. Catalytic component of the exosome, which is a complex involved in RNA degradation. Has 3'-&gt;5' exoribonuclease activity. Can also synthesize heteromeric RNA-tails. The protein is Exosome complex component Rrp41 of Methanosarcina mazei (strain ATCC BAA-159 / DSM 3647 / Goe1 / Go1 / JCM 11833 / OCM 88) (Methanosarcina frisia).